We begin with the raw amino-acid sequence, 145 residues long: Basic phospholipase A2 cPt10 (145 aa).

The N-terminal stretch at 1 to 21 (MYPAHLLVLLAVCVSLLGASA) is a signal peptide. A propeptide spanning residues 22–27 (IPPLPL) is cleaved from the precursor. Cystine bridges form between cysteine 38-cysteine 98, cysteine 54-cysteine 144, cysteine 56-cysteine 72, cysteine 71-cysteine 125, cysteine 78-cysteine 118, cysteine 87-cysteine 111, and cysteine 105-cysteine 116. Residues tyrosine 55, glycine 57, and glycine 59 each coordinate Ca(2+). Residue histidine 75 is part of the active site. Aspartate 76 serves as a coordination point for Ca(2+). Aspartate 119 is a catalytic residue.

It belongs to the phospholipase A2 family. Group I subfamily. D49 sub-subfamily. Ca(2+) serves as cofactor. Expressed by the venom gland.

It is found in the secreted. The catalysed reaction is a 1,2-diacyl-sn-glycero-3-phosphocholine + H2O = a 1-acyl-sn-glycero-3-phosphocholine + a fatty acid + H(+). In terms of biological role, PLA2 catalyzes the calcium-dependent hydrolysis of the 2-acyl groups in 3-sn-phosphoglycerides. The polypeptide is Basic phospholipase A2 cPt10 (Laticauda semifasciata (Black-banded sea krait)).